The primary structure comprises 190 residues: MASVRLFFTLISFVFIISTSVYESKVLDPPHVAESFNVSLIQKLGNTCAYTVIISTSCSSTRYTRDQISVAFGDGYGNQIYAPRLDDPSTKTFEQCSSDTFQINGPCTYQICYVYLYRSGPDGWIPNTVKIYSHGSKAVTFPYNTYVPESVWYGFNYCNSASDSNVLAIGLRRSVIILLGFVVAGTTLLL.

The first 24 residues, 1 to 24 (MASVRLFFTLISFVFIISTSVYES), serve as a signal peptide directing secretion. Asn37 carries an N-linked (GlcNAc...) asparagine glycan. One can recognise a PLAT domain in the interval 48–158 (CAYTVIISTS…ESVWYGFNYC (111 aa)).

In terms of assembly, interacts with EULS3 (via N-terminus). In terms of tissue distribution, expressed in roots, rosette leaves, stems, cauline leaves and flowers.

It localises to the secreted. In terms of biological role, may play a role during embryo development. The chain is Embryo-specific protein ATS3B from Arabidopsis thaliana (Mouse-ear cress).